Consider the following 293-residue polypeptide: Oxidoreductase clz16 (293 aa).

This sequence belongs to the asaB hydroxylase/desaturase family.

It participates in secondary metabolite biosynthesis. Oxidoreductase; part of the gene cluster that mediates the biosynthesis of squalestatin S1 (SQS1, also known as zaragozic acid A), a heavily oxidized fungal polyketide that offers potent cholesterol lowering activity by targeting squalene synthase (SS). SQS1 is composed of a 2,8-dioxobicyclic[3.2.1]octane-3,4,5-tricarboxyclic acid core that is connected to two lipophilic polyketide arms. These initial steps feature the priming of an unusual benzoic acid starter unit onto the highly reducing polyketide synthase clz14, followed by oxaloacetate extension and product release to generate a tricarboxylic acid containing product. The phenylalanine ammonia lyase (PAL) clz10 and the acyl-CoA ligase clz12 are involved in transforming phenylalanine into benzoyl-CoA. The citrate synthase-like protein clz17 is involved in connecting the C-alpha-carbons of the hexaketide chain and oxaloacetate to afford the tricarboxylic acid unit. The potential hydrolytic enzymes, clz11 and clz13, are in close proximity to pks2 and may participate in product release. On the other side, the tetraketide arm is synthesized by a the squalestatin tetraketide synthase clz2 and enzymatically esterified to the core in the last biosynthetic step, by the acetyltransferase clz6. The biosynthesis of the tetraketide must involve 3 rounds of chain extension. After the first and second rounds methyl-transfer occurs, and in all rounds of extension the ketoreductase and dehydratase are active. The enoyl reductase and C-MeT of clz2 are not active in the final round of extension. The acetyltransferase clz6 appears to have a broad substrate selectivity for its acyl CoA substrate, allowing the in vitro synthesis of novel squalestatins. The biosynthesis of SQS1 requires several oxidative steps likely performed by oxidoreductases clz3, clz15 and clz16. Finally, in support of the identification of the cluster as being responsible for SQS1 production, the cluster contains a gene encoding a putative squalene synthase (SS) clz20, suggesting a likely mechanism for self-resistance. In Cochliobolus lunatus (Filamentous fungus), this protein is Oxidoreductase clz16.